The following is a 177-amino-acid chain: Glia associated membrane protein glam-1 (177 aa).

3 helical membrane-spanning segments follow: residues 19–39, 42–62, and 76–96; these read PLVVGLAVFGAIRSFVQFWMS, FGMAGTHFCVLLLDLLLLFGA, and VTFACVLIAIIRFMIYPVVFA.

Its subcellular location is the membrane. This chain is Glia associated membrane protein glam-1, found in Caenorhabditis elegans.